We begin with the raw amino-acid sequence, 260 residues long: Hydroxyacylglutathione hydrolase (260 aa).

7 residues coordinate Zn(2+): histidine 55, histidine 57, aspartate 59, histidine 60, histidine 116, aspartate 133, and histidine 171.

This sequence belongs to the metallo-beta-lactamase superfamily. Glyoxalase II family. Monomer. The cofactor is Zn(2+).

It catalyses the reaction an S-(2-hydroxyacyl)glutathione + H2O = a 2-hydroxy carboxylate + glutathione + H(+). The protein operates within secondary metabolite metabolism; methylglyoxal degradation; (R)-lactate from methylglyoxal: step 2/2. In terms of biological role, thiolesterase that catalyzes the hydrolysis of S-D-lactoyl-glutathione to form glutathione and D-lactic acid. The protein is Hydroxyacylglutathione hydrolase of Shewanella loihica (strain ATCC BAA-1088 / PV-4).